The sequence spans 297 residues: Probable oxidoreductase (297 aa).

9–33 (VVTGGASGLGAETVRALAAAGAEVT) is an NAD(+) binding site. Position 138 (Ser138) interacts with substrate. Catalysis depends on Tyr164, which acts as the Proton acceptor.

The protein belongs to the short-chain dehydrogenases/reductases (SDR) family.

The chain is Probable oxidoreductase from Streptomyces lividans.